A 469-amino-acid chain; its full sequence is Adenosylhomocysteinase (469 aa).

Residues T63, D139, and E164 each contribute to the substrate site. Residue 165-167 (TTT) coordinates NAD(+). K194 and D198 together coordinate substrate. NAD(+) contacts are provided by residues N199, 228–233 (GYGDVG), E251, N300, 321–323 (IGH), and N375.

This sequence belongs to the adenosylhomocysteinase family. It depends on NAD(+) as a cofactor.

The protein resides in the cytoplasm. The enzyme catalyses S-adenosyl-L-homocysteine + H2O = L-homocysteine + adenosine. It participates in amino-acid biosynthesis; L-homocysteine biosynthesis; L-homocysteine from S-adenosyl-L-homocysteine: step 1/1. Functionally, may play a key role in the regulation of the intracellular concentration of adenosylhomocysteine. This is Adenosylhomocysteinase from Pseudomonas aeruginosa (strain LESB58).